Here is a 469-residue protein sequence, read N- to C-terminus: Light-independent protochlorophyllide reductase subunit N (469 aa).

3 residues coordinate [4Fe-4S] cluster: cysteine 24, cysteine 49, and cysteine 109.

It belongs to the BchN/ChlN family. As to quaternary structure, protochlorophyllide reductase is composed of three subunits; ChlL, ChlN and ChlB. Forms a heterotetramer of two ChlB and two ChlN subunits. It depends on [4Fe-4S] cluster as a cofactor.

The enzyme catalyses chlorophyllide a + oxidized 2[4Fe-4S]-[ferredoxin] + 2 ADP + 2 phosphate = protochlorophyllide a + reduced 2[4Fe-4S]-[ferredoxin] + 2 ATP + 2 H2O. Its pathway is porphyrin-containing compound metabolism; chlorophyll biosynthesis (light-independent). Functionally, component of the dark-operative protochlorophyllide reductase (DPOR) that uses Mg-ATP and reduced ferredoxin to reduce ring D of protochlorophyllide (Pchlide) to form chlorophyllide a (Chlide). This reaction is light-independent. The NB-protein (ChlN-ChlB) is the catalytic component of the complex. In Gloeobacter violaceus (strain ATCC 29082 / PCC 7421), this protein is Light-independent protochlorophyllide reductase subunit N.